The sequence spans 347 residues: MLVLGIESSCDETGVALYDTHSGLRAHALYSQIAMHREYGGVVPELASRDHIRRVIPLLEEVLGKAGATRADIDAIAYTKGPGLAGALLVGASVANALAFALGKPLVAVHHLEGHLLSPLLEADRPEFPFLALLVSGGHTQLMRVDAVGQYTLLGETLDDAAGEAFDKTAKLLGLGYPGGPAVSRLAEFGNPGVFDLPRPMLHSGNFDFSFAGLKTAVLTQVRKLNLTDSETCYQPRADLARAFVDAIVEVLVKKTLRAAREHGLKRIVVAGGVGANRQLREGLNAEGKKRGLRVYYPDLQFCTDNGAMIAFAGAMRLQADPAQVQDGYGYGVTPRWDLEDIRIRHA.

Residues H111 and H115 each coordinate Fe cation. Substrate-binding positions include 134–138, D167, G180, and N277; that span reads LVSGG. Residue D305 participates in Fe cation binding.

This sequence belongs to the KAE1 / TsaD family. It depends on Fe(2+) as a cofactor.

It localises to the cytoplasm. The catalysed reaction is L-threonylcarbamoyladenylate + adenosine(37) in tRNA = N(6)-L-threonylcarbamoyladenosine(37) in tRNA + AMP + H(+). In terms of biological role, required for the formation of a threonylcarbamoyl group on adenosine at position 37 (t(6)A37) in tRNAs that read codons beginning with adenine. Is involved in the transfer of the threonylcarbamoyl moiety of threonylcarbamoyl-AMP (TC-AMP) to the N6 group of A37, together with TsaE and TsaB. TsaD likely plays a direct catalytic role in this reaction. This Ralstonia pickettii (strain 12J) protein is tRNA N6-adenosine threonylcarbamoyltransferase.